A 496-amino-acid polypeptide reads, in one-letter code: UDP-N-acetylmuramoyl-L-alanyl-D-glutamate--2,6-diaminopimelate ligase (496 aa).

Ser32 contributes to the UDP-N-acetyl-alpha-D-muramoyl-L-alanyl-D-glutamate binding site. 116–122 (GTNGKTT) lines the ATP pocket. UDP-N-acetyl-alpha-D-muramoyl-L-alanyl-D-glutamate contacts are provided by residues 158–159 (TT), Ser185, Gln191, and Arg193. Lys225 is modified (N6-carboxylysine). Meso-2,6-diaminopimelate is bound by residues Arg389, 413–416 (DNPR), Gly464, and Glu468. Positions 413–416 (DNPR) match the Meso-diaminopimelate recognition motif motif.

Belongs to the MurCDEF family. MurE subfamily. Requires Mg(2+) as cofactor. Carboxylation is probably crucial for Mg(2+) binding and, consequently, for the gamma-phosphate positioning of ATP.

The protein resides in the cytoplasm. The catalysed reaction is UDP-N-acetyl-alpha-D-muramoyl-L-alanyl-D-glutamate + meso-2,6-diaminopimelate + ATP = UDP-N-acetyl-alpha-D-muramoyl-L-alanyl-gamma-D-glutamyl-meso-2,6-diaminopimelate + ADP + phosphate + H(+). It functions in the pathway cell wall biogenesis; peptidoglycan biosynthesis. Catalyzes the addition of meso-diaminopimelic acid to the nucleotide precursor UDP-N-acetylmuramoyl-L-alanyl-D-glutamate (UMAG) in the biosynthesis of bacterial cell-wall peptidoglycan. The sequence is that of UDP-N-acetylmuramoyl-L-alanyl-D-glutamate--2,6-diaminopimelate ligase from Nostoc sp. (strain PCC 7120 / SAG 25.82 / UTEX 2576).